Here is an 841-residue protein sequence, read N- to C-terminus: MAP7 domain-containing protein 1 (841 aa).

Disordered stretches follow at residues 1–151 and 184–208; these read MESG…ERAK and EQRL…EKNK. Pro residues predominate over residues 22 to 52; it reads PPEPRPSPEGDPSPPPPPMSALVPDTPPDTP. Phosphothreonine is present on residues T47 and T51. Phosphoserine occurs at positions 70, 86, and 93. A Phosphothreonine modification is found at T97. Phosphoserine occurs at positions 113 and 116. T118 is modified (phosphothreonine). S123 and S125 each carry phosphoserine. Residues 128-222 are a coiled coil; sequence TKQEVKKAGE…AAIQRSVKKT (95 aa). A compositionally biased stretch (basic and acidic residues) spans 130 to 151; it reads QEVKKAGERHKLAKERREERAK. 5 positions are modified to phosphoserine: S254, S273, S313, S366, and S399. A disordered region spans residues 316–813; it reads TLPRNGRDQG…PSGDKSLSRT (498 aa). A compositionally biased stretch (polar residues) spans 365–377; it reads ASASPLTPCSVTR. Residues 405-435 are compositionally biased toward basic and acidic residues; the sequence is RRPEASPVQKKEKKDKERENEKEKSALARER. Positions 412–441 form a coiled coil; sequence VQKKEKKDKERENEKEKSALARERSLKKRQ. Residues S442, S446, S452, S454, and S460 each carry the phosphoserine modification. The span at 460 to 473 shows a compositional bias: low complexity; sequence SPKSKARPSSPSTS. Residue K462 forms a Glycyl lysine isopeptide (Lys-Gly) (interchain with G-Cter in SUMO2) linkage. 2 positions are modified to phosphoserine: S479 and S496. Residues 479–497 show a composition bias toward pro residues; it reads SPCPSPGPGHTLPPKPPSP. The segment covering 523–539 has biased composition (basic and acidic residues); that stretch reads PEDKSQSKRRASNEKES. S544, S548, and S552 each carry phosphoserine. The span at 544–561 shows a compositional bias: pro residues; sequence SPAPSPAPSPTPAPPQKE. At T554 the chain carries Phosphothreonine. A compositionally biased stretch (low complexity) spans 562-576; that stretch reads QPPAETPTDAAVLTS. Pro residues predominate over residues 577–586; the sequence is PPAPAPPVTP. Residues 593–721 are a coiled coil; that stretch reads TTDREEATRL…LEEIMKRTRK (129 aa). Residues 594–735 are compositionally biased toward basic and acidic residues; the sequence is TDREEATRLL…ETKQKQDSKE (142 aa). S742 and S753 each carry phosphoserine. T813 and T816 each carry phosphothreonine. S834 carries the phosphoserine modification.

Belongs to the MAP7 family.

It is found in the cytoplasm. It localises to the cytoskeleton. The protein resides in the spindle. Its subcellular location is the microtubule organizing center. The protein localises to the centrosome. It is found in the midbody. In terms of biological role, microtubule-stabilizing protein involved in the control of cell motility and neurite outgrowth. Facilitate microtubule stabilization through the maintenance of acetylated stable microtubules. This is MAP7 domain-containing protein 1 (MAP7D1) from Homo sapiens (Human).